A 318-amino-acid chain; its full sequence is tRNA-cytidine(32) 2-sulfurtransferase (318 aa).

The PP-loop motif motif lies at 52–57 (SGGKDS). [4Fe-4S] cluster is bound by residues C127, C130, and C218.

The protein belongs to the TtcA family. As to quaternary structure, homodimer. The cofactor is Mg(2+). [4Fe-4S] cluster is required as a cofactor.

The protein localises to the cytoplasm. The enzyme catalyses cytidine(32) in tRNA + S-sulfanyl-L-cysteinyl-[cysteine desulfurase] + AH2 + ATP = 2-thiocytidine(32) in tRNA + L-cysteinyl-[cysteine desulfurase] + A + AMP + diphosphate + H(+). The protein operates within tRNA modification. Its function is as follows. Catalyzes the ATP-dependent 2-thiolation of cytidine in position 32 of tRNA, to form 2-thiocytidine (s(2)C32). The sulfur atoms are provided by the cysteine/cysteine desulfurase (IscS) system. This Actinobacillus pleuropneumoniae serotype 5b (strain L20) protein is tRNA-cytidine(32) 2-sulfurtransferase.